The sequence spans 85 residues: SCOCO-like protein 1 (85 aa).

Polar residues predominate over residues Met-1 to Val-20. Positions Met-1–Met-34 are disordered. N-acetylserine is present on Ser-2. A Phosphoserine modification is found at Ser-10. Basic and acidic residues predominate over residues Leu-22–Met-34.

This sequence belongs to the SLO1 family. As to quaternary structure, interacts with ARL3.

This is SCOCO-like protein 1 (SLO1) from Saccharomyces cerevisiae (strain ATCC 204508 / S288c) (Baker's yeast).